The sequence spans 139 residues: uncharacterized protein (139 aa).

This is an uncharacterized protein from Sputnik virophage.